Reading from the N-terminus, the 157-residue chain is Probable succinate transporter subunit YjjB (157 aa).

Helical transmembrane passes span phenylalanine 6 to methionine 26, alanine 55 to isoleucine 75, valine 87 to isoleucine 107, and phenylalanine 129 to tryptophan 149.

It belongs to the ThrE exporter (TC 2.A.79) family. The transporter is composed of YjjB and YjjP.

It is found in the cell inner membrane. In terms of biological role, involved in succinate export with YjjP. Both proteins are required for export. This is Probable succinate transporter subunit YjjB from Salmonella arizonae (strain ATCC BAA-731 / CDC346-86 / RSK2980).